The chain runs to 412 residues: Type II methyltransferase M.Sau3AI (412 aa).

One can recognise an SAM-dependent MTase C5-type domain in the interval 4 to 402; sequence IKVVELFAGV…NQIEKIDSIT (399 aa). C85 is an active-site residue.

Belongs to the class I-like SAM-binding methyltransferase superfamily. C5-methyltransferase family.

It catalyses the reaction a 2'-deoxycytidine in DNA + S-adenosyl-L-methionine = a 5-methyl-2'-deoxycytidine in DNA + S-adenosyl-L-homocysteine + H(+). Functionally, a methylase that recognizes the double-stranded sequence 5'-GATC-3', methylates C-4 on both strands and protects the DNA from cleavage by the Sau3AI endonuclease. The protein is Type II methyltransferase M.Sau3AI (sau3AIM) of Staphylococcus aureus.